The sequence spans 347 residues: Ribosomal RNA large subunit methyltransferase M (347 aa).

S-adenosyl-L-methionine-binding positions include S184, A217–G220, D236, D256, and D272. The active-site Proton acceptor is the K301.

Belongs to the class I-like SAM-binding methyltransferase superfamily. RNA methyltransferase RlmE family. RlmM subfamily. As to quaternary structure, monomer.

It is found in the cytoplasm. The enzyme catalyses cytidine(2498) in 23S rRNA + S-adenosyl-L-methionine = 2'-O-methylcytidine(2498) in 23S rRNA + S-adenosyl-L-homocysteine + H(+). Functionally, catalyzes the 2'-O-methylation at nucleotide C2498 in 23S rRNA. This Xanthomonas oryzae pv. oryzae (strain KACC10331 / KXO85) protein is Ribosomal RNA large subunit methyltransferase M.